Consider the following 361-residue polypeptide: POU domain, class 3, transcription factor 4 (361 aa).

Disordered regions lie at residues 99–131 (PHVAHHSPHTNHPNAWGASPAPNSSITNSGQPL) and 144–192 (MLEH…PTSD). Residues 119 to 131 (APNSSITNSGQPL) show a composition bias toward polar residues. Residues 165 to 183 (VLREPPDHGELGSHHCQDH) are compositionally biased toward basic and acidic residues. One can recognise a POU-specific domain in the interval 186–260 (EETPTSDELE…LLNKWLEEAD (75 aa)). A Phosphoserine modification is found at Ser-265. The homeobox DNA-binding region spans 278-337 (KRKKRTSIEVSVKGVLETHFLKCPKPAAQEISSLADSLQLEKEVVRVWFCNRRQKEKRMT). A disordered region spans residues 334-361 (KRMTPPGDQQPHEVYSHTVKTDASCHDL). The span at 343-361 (QPHEVYSHTVKTDASCHDL) shows a compositional bias: basic and acidic residues.

The protein belongs to the POU transcription factor family. Class-3 subfamily.

It is found in the nucleus. In terms of biological role, probable transcription factor which exert its primary action widely during early neural development and in a very limited set of neurons in the mature brain. This chain is POU domain, class 3, transcription factor 4 (Pou3f4), found in Mesocricetus auratus (Golden hamster).